Here is a 273-residue protein sequence, read N- to C-terminus: Dermonecrotic toxin LdSicTox-alphaIB1aii (273 aa).

H5 is an active-site residue. Residues E25 and D27 each coordinate Mg(2+). H41 functions as the Nucleophile in the catalytic mechanism. 2 disulfide bridges follow: C45–C51 and C47–C190. D85 contacts Mg(2+). N250 is a glycosylation site (N-linked (GlcNAc...) asparagine).

This sequence belongs to the arthropod phospholipase D family. Class II subfamily. The cofactor is Mg(2+). Expressed by the venom gland.

The protein resides in the secreted. The enzyme catalyses an N-(acyl)-sphingosylphosphocholine = an N-(acyl)-sphingosyl-1,3-cyclic phosphate + choline. The catalysed reaction is an N-(acyl)-sphingosylphosphoethanolamine = an N-(acyl)-sphingosyl-1,3-cyclic phosphate + ethanolamine. It catalyses the reaction a 1-acyl-sn-glycero-3-phosphocholine = a 1-acyl-sn-glycero-2,3-cyclic phosphate + choline. It carries out the reaction a 1-acyl-sn-glycero-3-phosphoethanolamine = a 1-acyl-sn-glycero-2,3-cyclic phosphate + ethanolamine. Its function is as follows. Dermonecrotic toxins cleave the phosphodiester linkage between the phosphate and headgroup of certain phospholipids (sphingolipid and lysolipid substrates), forming an alcohol (often choline) and a cyclic phosphate. This toxin acts on sphingomyelin (SM). It may also act on ceramide phosphoethanolamine (CPE), lysophosphatidylcholine (LPC) and lysophosphatidylethanolamine (LPE), but not on lysophosphatidylserine (LPS), and lysophosphatidylglycerol (LPG). It acts by transphosphatidylation, releasing exclusively cyclic phosphate products as second products. Induces dermonecrosis, hemolysis, increased vascular permeability, edema, inflammatory response, and platelet aggregation. This is Dermonecrotic toxin LdSicTox-alphaIB1aii from Loxosceles deserta (Desert recluse spider).